A 150-amino-acid chain; its full sequence is Small ribosomal subunit protein eS19 (150 aa).

It belongs to the eukaryotic ribosomal protein eS19 family. Part of the 30S ribosomal subunit.

In terms of biological role, may be involved in maturation of the 30S ribosomal subunit. The chain is Small ribosomal subunit protein eS19 from Pyrococcus horikoshii (strain ATCC 700860 / DSM 12428 / JCM 9974 / NBRC 100139 / OT-3).